We begin with the raw amino-acid sequence, 344 residues long: Lipase chaperone (344 aa).

A helical membrane pass occupies residues alanine 14–alanine 34. Positions alanine 39 to serine 78 are disordered.

It belongs to the lipase chaperone family.

It localises to the cell inner membrane. In terms of biological role, may be involved in the folding of the extracellular lipase during its passage through the periplasm. The polypeptide is Lipase chaperone (lifO) (Pseudomonas sp. (strain KWI-56)).